A 515-amino-acid polypeptide reads, in one-letter code: Probable NADPH:adrenodoxin oxidoreductase, mitochondrial (515 aa).

FAD is bound by residues A52, E73, L81, and I119. Residues 191 to 194 (QGNV), 236 to 237 (RR), and E248 each bind NADP(+). FAD is bound by residues W419 and 426 to 428 (GSI). Position 426 (G426) interacts with NADP(+).

It belongs to the ferredoxin--NADP reductase type 1 family. FAD is required as a cofactor.

The protein resides in the mitochondrion inner membrane. It catalyses the reaction 2 reduced [adrenodoxin] + NADP(+) + H(+) = 2 oxidized [adrenodoxin] + NADPH. The sequence is that of Probable NADPH:adrenodoxin oxidoreductase, mitochondrial (fdxr) from Dictyostelium discoideum (Social amoeba).